The chain runs to 469 residues: Dihydrolipoyl dehydrogenase (469 aa).

FAD-binding positions include 40 to 48 (EKAVLGGVC), Lys57, and Ala120. The cysteines at positions 48 and 53 are disulfide-linked. NAD(+) is bound by residues 186-190 (GGGAI), Glu209, and 275-278 (AVGV). The FAD site is built by Asp317 and Ala325. His450 acts as the Proton acceptor in catalysis.

This sequence belongs to the class-I pyridine nucleotide-disulfide oxidoreductase family. Homodimer. It depends on FAD as a cofactor.

The protein resides in the cytoplasm. It carries out the reaction N(6)-[(R)-dihydrolipoyl]-L-lysyl-[protein] + NAD(+) = N(6)-[(R)-lipoyl]-L-lysyl-[protein] + NADH + H(+). Its function is as follows. Lipoamide dehydrogenase is a component of the alpha-ketoacid dehydrogenase complexes. In Chlorobaculum tepidum (strain ATCC 49652 / DSM 12025 / NBRC 103806 / TLS) (Chlorobium tepidum), this protein is Dihydrolipoyl dehydrogenase (lpd).